Here is a 270-residue protein sequence, read N- to C-terminus: tRNA pseudouridine synthase A (270 aa).

Catalysis depends on aspartate 52, which acts as the Nucleophile. Tyrosine 110 is a binding site for substrate. The disordered stretch occupies residues 251-270; it reads TGAADEPAAPHGVTETRMQL.

This sequence belongs to the tRNA pseudouridine synthase TruA family. In terms of assembly, homodimer.

The enzyme catalyses uridine(38/39/40) in tRNA = pseudouridine(38/39/40) in tRNA. In terms of biological role, formation of pseudouridine at positions 38, 39 and 40 in the anticodon stem and loop of transfer RNAs. This is tRNA pseudouridine synthase A from Roseiflexus sp. (strain RS-1).